A 204-amino-acid chain; its full sequence is Holliday junction branch migration complex subunit RuvA (204 aa).

Residues 1 to 64 (MIGKLKGTID…EDQLKLFGFM (64 aa)) form a domain I region. The tract at residues 65–143 (TALEREWFNL…AFAGEAINIG (79 aa)) is domain II. Positions 144–151 (LKQELGEG) are flexible linker. The interval 152-204 (VAAAPVADAVSALTNLGYSRDQAANAIAAAMKTAGEGADSAKLIRLGLKELAR) is domain III.

Belongs to the RuvA family. Homotetramer. Forms an RuvA(8)-RuvB(12)-Holliday junction (HJ) complex. HJ DNA is sandwiched between 2 RuvA tetramers; dsDNA enters through RuvA and exits via RuvB. An RuvB hexamer assembles on each DNA strand where it exits the tetramer. Each RuvB hexamer is contacted by two RuvA subunits (via domain III) on 2 adjacent RuvB subunits; this complex drives branch migration. In the full resolvosome a probable DNA-RuvA(4)-RuvB(12)-RuvC(2) complex forms which resolves the HJ.

The protein resides in the cytoplasm. In terms of biological role, the RuvA-RuvB-RuvC complex processes Holliday junction (HJ) DNA during genetic recombination and DNA repair, while the RuvA-RuvB complex plays an important role in the rescue of blocked DNA replication forks via replication fork reversal (RFR). RuvA specifically binds to HJ cruciform DNA, conferring on it an open structure. The RuvB hexamer acts as an ATP-dependent pump, pulling dsDNA into and through the RuvAB complex. HJ branch migration allows RuvC to scan DNA until it finds its consensus sequence, where it cleaves and resolves the cruciform DNA. The sequence is that of Holliday junction branch migration complex subunit RuvA from Rhizobium johnstonii (strain DSM 114642 / LMG 32736 / 3841) (Rhizobium leguminosarum bv. viciae).